Consider the following 651-residue polypeptide: MSAASLYPVRPEVAATTLTDEATYKAMYQQSVVNPDGFWREQAQRLDWIKPFSVVKQTSFDDHRVDIKWFADGTLNVAYNCLDRHLAERGDTIAIIWEGDNPSEHREITYRELHAEVCKFANALRGQDVHRGDVVTIYMPMIPEAVVAMLACARIGAIHSVVFGGFSPEALAGRIIDCSSKVVITADEGLRGGKKTALKANVDRALTNPETSSVQKVIVCKRTGGEIEWNRHRDIWYHSLLEVASSTCAPKEMGAEESLFILYTSGSTGKPKGVLHTTAGYLLYAALTHERVFDYKPGEIYWCTADVGWVTGHSYIVYGPLANGATTLLFEGVPNYPDITRVSKIIDKHKVNILYTAPTAIRAMMAEGTKSVEGADGSSLRLLGSVGEPINPEAWGWYYNTVGKQNCPIVDTWWQTETGGILISPLPGATALKPGSATRPFFGVIPALVDNLGNLIEGAAEGNLVILDSWPGQSRSLYGDHDRFVDTYFKTFRGMYFTGDGARRDEDGYYWITGRVDDVLNVSGHRMGTAEIESAMVAHPKVAEAAVVGVPHDLKGQGIYVYVTLNGGEEPSDALRTELRNWVRKEIGPIASPDFIQWAPGLPKTRSGKIMRRILRKIATAEYDALGDISTLADPGVVQHLIDTHKTMNAA.

Residues 191–194 (RGGK), Thr-311, and Asn-335 each bind CoA. Residues 387–389 (GEP), 411–416 (DTWWQT), Asp-500, and Arg-515 each bind ATP. Ser-523 contacts CoA. An ATP-binding site is contributed by Arg-526. Val-537, His-539, and Val-542 together coordinate Mg(2+). Arg-584 lines the CoA pocket. Lys-609 bears the N6-acetyllysine mark.

This sequence belongs to the ATP-dependent AMP-binding enzyme family. Requires Mg(2+) as cofactor. Acetylated. Deacetylation by the SIR2-homolog deacetylase activates the enzyme.

It carries out the reaction acetate + ATP + CoA = acetyl-CoA + AMP + diphosphate. Catalyzes the conversion of acetate into acetyl-CoA (AcCoA), an essential intermediate at the junction of anabolic and catabolic pathways. AcsA undergoes a two-step reaction. In the first half reaction, AcsA combines acetate with ATP to form acetyl-adenylate (AcAMP) intermediate. In the second half reaction, it can then transfer the acetyl group from AcAMP to the sulfhydryl group of CoA, forming the product AcCoA. This is Acetyl-coenzyme A synthetase from Pseudomonas savastanoi pv. phaseolicola (strain 1448A / Race 6) (Pseudomonas syringae pv. phaseolicola (strain 1448A / Race 6)).